The sequence spans 477 residues: Bifunctional protein HldE (477 aa).

The interval 1–318 is ribokinase; it reads MKVTLPEFER…ENAVRGRADT (318 aa). An N6-acetyllysine modification is found at Lys179. 195-198 is a binding site for ATP; it reads NLSE. The active site involves Asp264. The cytidylyltransferase stretch occupies residues 344 to 477; it reads MTNGVFDILH…IKKIQQDKKG (134 aa).

The protein in the N-terminal section; belongs to the carbohydrate kinase PfkB family. This sequence in the C-terminal section; belongs to the cytidylyltransferase family. As to quaternary structure, homodimer.

It carries out the reaction D-glycero-beta-D-manno-heptose 7-phosphate + ATP = D-glycero-beta-D-manno-heptose 1,7-bisphosphate + ADP + H(+). The catalysed reaction is D-glycero-beta-D-manno-heptose 1-phosphate + ATP + H(+) = ADP-D-glycero-beta-D-manno-heptose + diphosphate. Its pathway is nucleotide-sugar biosynthesis; ADP-L-glycero-beta-D-manno-heptose biosynthesis; ADP-L-glycero-beta-D-manno-heptose from D-glycero-beta-D-manno-heptose 7-phosphate: step 1/4. It participates in nucleotide-sugar biosynthesis; ADP-L-glycero-beta-D-manno-heptose biosynthesis; ADP-L-glycero-beta-D-manno-heptose from D-glycero-beta-D-manno-heptose 7-phosphate: step 3/4. In terms of biological role, catalyzes the phosphorylation of D-glycero-D-manno-heptose 7-phosphate at the C-1 position to selectively form D-glycero-beta-D-manno-heptose-1,7-bisphosphate. Functionally, catalyzes the ADP transfer from ATP to D-glycero-beta-D-manno-heptose 1-phosphate, yielding ADP-D-glycero-beta-D-manno-heptose. The polypeptide is Bifunctional protein HldE (Escherichia coli O17:K52:H18 (strain UMN026 / ExPEC)).